The sequence spans 232 residues: 2-C-methyl-D-erythritol 4-phosphate cytidylyltransferase (232 aa).

Belongs to the IspD/TarI cytidylyltransferase family. IspD subfamily.

The catalysed reaction is 2-C-methyl-D-erythritol 4-phosphate + CTP + H(+) = 4-CDP-2-C-methyl-D-erythritol + diphosphate. Its pathway is isoprenoid biosynthesis; isopentenyl diphosphate biosynthesis via DXP pathway; isopentenyl diphosphate from 1-deoxy-D-xylulose 5-phosphate: step 2/6. Catalyzes the formation of 4-diphosphocytidyl-2-C-methyl-D-erythritol from CTP and 2-C-methyl-D-erythritol 4-phosphate (MEP). This chain is 2-C-methyl-D-erythritol 4-phosphate cytidylyltransferase, found in Deinococcus radiodurans (strain ATCC 13939 / DSM 20539 / JCM 16871 / CCUG 27074 / LMG 4051 / NBRC 15346 / NCIMB 9279 / VKM B-1422 / R1).